Consider the following 78-residue polypeptide: Acyl carrier protein (78 aa).

A Carrier domain is found at 2-77 (SEIASRVKAI…DAVAYIEEHA (76 aa)). O-(pantetheine 4'-phosphoryl)serine is present on Ser37.

Belongs to the acyl carrier protein (ACP) family. Post-translationally, 4'-phosphopantetheine is transferred from CoA to a specific serine of apo-ACP by AcpS. This modification is essential for activity because fatty acids are bound in thioester linkage to the sulfhydryl of the prosthetic group.

The protein resides in the cytoplasm. The protein operates within lipid metabolism; fatty acid biosynthesis. Functionally, carrier of the growing fatty acid chain in fatty acid biosynthesis. The chain is Acyl carrier protein from Bacteroides fragilis (strain ATCC 25285 / DSM 2151 / CCUG 4856 / JCM 11019 / LMG 10263 / NCTC 9343 / Onslow / VPI 2553 / EN-2).